Here is a 299-residue protein sequence, read N- to C-terminus: Kruppel-like factor 2 (299 aa).

2 disordered regions span residues 19 to 38 (YQNA…SHHH) and 146 to 189 (YSFS…RRDK). Residues 23-38 (HHQHHQQHYHQQSHHH) show a composition bias toward basic residues. Positions 153–180 (SGKDEEDPRIPLKDRGRVYHPQSTEKPK) are enriched in basic and acidic residues. C2H2-type zinc fingers lie at residues 198-222 (HKCF…ERVH), 228-252 (YPCE…YRKH), and 258-280 (FACK…MKRH).

It belongs to the krueppel C2H2-type zinc-finger protein family. In terms of tissue distribution, expressed predominantly in intestine.

It localises to the nucleus. In terms of biological role, probable transcription factor which regulates lipid metabolism. In Caenorhabditis elegans, this protein is Kruppel-like factor 2.